A 234-amino-acid polypeptide reads, in one-letter code: Opacity protein opA55 (234 aa).

A signal peptide is located at residue Ala-1.

Belongs to the opacity porin family.

Its subcellular location is the cell outer membrane. Functionally, implicated in a number of adherence functions. OPA proteins are implicated in pathogenesis and are subject to phase variation. The chain is Opacity protein opA55 (opaE) from Neisseria gonorrhoeae.